The sequence spans 549 residues: Phosphoenolpyruvate carboxykinase (ATP) (549 aa).

250-257 (GLSGTGKT) is a binding site for ATP.

It belongs to the phosphoenolpyruvate carboxykinase (ATP) family. In terms of assembly, homotetramer.

It carries out the reaction oxaloacetate + ATP = phosphoenolpyruvate + ADP + CO2. The protein operates within carbohydrate biosynthesis; gluconeogenesis. The protein is Phosphoenolpyruvate carboxykinase (ATP) (PCK1) of Saccharomyces cerevisiae (strain ATCC 204508 / S288c) (Baker's yeast).